A 418-amino-acid chain; its full sequence is Failed axon connections (418 aa).

Disordered regions lie at residues 1 to 95 (MASE…QKFN) and 361 to 418 (AHIP…EETK). Composition is skewed to low complexity over residues 9 to 19 (PAEETPAVAAA) and 28 to 45 (SAAP…APAV). 2 stretches are compositionally biased toward basic and acidic residues: residues 46–77 (EKAE…KDEA) and 364–418 (PKPE…EETK).

It belongs to the FAX family.

Together with Abl, involved in embryonic axonal development. The protein is Failed axon connections (fax) of Drosophila melanogaster (Fruit fly).